Reading from the N-terminus, the 336-residue chain is Nicotinate-nucleotide--dimethylbenzimidazole phosphoribosyltransferase (336 aa).

The Proton acceptor role is filled by Glu304.

Belongs to the CobT family.

It carries out the reaction 5,6-dimethylbenzimidazole + nicotinate beta-D-ribonucleotide = alpha-ribazole 5'-phosphate + nicotinate + H(+). It functions in the pathway nucleoside biosynthesis; alpha-ribazole biosynthesis; alpha-ribazole from 5,6-dimethylbenzimidazole: step 1/2. In terms of biological role, catalyzes the synthesis of alpha-ribazole-5'-phosphate from nicotinate mononucleotide (NAMN) and 5,6-dimethylbenzimidazole (DMB). The chain is Nicotinate-nucleotide--dimethylbenzimidazole phosphoribosyltransferase from Mesorhizobium japonicum (strain LMG 29417 / CECT 9101 / MAFF 303099) (Mesorhizobium loti (strain MAFF 303099)).